The primary structure comprises 677 residues: Histidine ammonia-lyase (677 aa).

Residues 269-271 (CSG) constitute a cross-link (5-imidazolinone (Cys-Gly)). Ser270 carries the post-translational modification 2,3-didehydroalanine (Ser).

This sequence belongs to the PAL/histidase family. In terms of processing, contains an active site 4-methylidene-imidazol-5-one (MIO), which is formed autocatalytically by cyclization and dehydration of residues Cys-Ser-Gly.

It carries out the reaction L-histidine = trans-urocanate + NH4(+). It functions in the pathway amino-acid degradation; L-histidine degradation into L-glutamate; N-formimidoyl-L-glutamate from L-histidine: step 1/3. This is Histidine ammonia-lyase from Caenorhabditis elegans.